We begin with the raw amino-acid sequence, 339 residues long: Protein-glutamate methylesterase/protein-glutamine glutaminase (339 aa).

Residues arginine 2–arginine 119 form the Response regulatory domain. 4-aspartylphosphate is present on aspartate 53. Positions proline 149–serine 338 constitute a CheB-type methylesterase domain. Active-site residues include serine 160, histidine 187, and aspartate 280.

It belongs to the CheB family. In terms of processing, phosphorylated by CheA. Phosphorylation of the N-terminal regulatory domain activates the methylesterase activity.

It is found in the cytoplasm. It carries out the reaction [protein]-L-glutamate 5-O-methyl ester + H2O = L-glutamyl-[protein] + methanol + H(+). The enzyme catalyses L-glutaminyl-[protein] + H2O = L-glutamyl-[protein] + NH4(+). In terms of biological role, involved in chemotaxis. Part of a chemotaxis signal transduction system that modulates chemotaxis in response to various stimuli. Catalyzes the demethylation of specific methylglutamate residues introduced into the chemoreceptors (methyl-accepting chemotaxis proteins or MCP) by CheR. Also mediates the irreversible deamidation of specific glutamine residues to glutamic acid. The polypeptide is Protein-glutamate methylesterase/protein-glutamine glutaminase (Mesorhizobium japonicum (strain LMG 29417 / CECT 9101 / MAFF 303099) (Mesorhizobium loti (strain MAFF 303099))).